Here is a 517-residue protein sequence, read N- to C-terminus: Nuclear receptor subfamily 5 group A member 2 (517 aa).

The segment at residues Asp-43–Ala-118 is a DNA-binding region (nuclear receptor). Residues Cys-46, Cys-49, Cys-63, Cys-66, Cys-82, Cys-88, Cys-98, and Cys-101 each contribute to the Zn(2+) site. 2 consecutive NR C4-type zinc fingers follow at residues Cys-46–Cys-66 and Cys-82–Cys-101. The C-terminal extension (CTE) stretch occupies residues Lys-112–Lys-127. An FTZ-F1 box motif is present at residues Phe-128–Arg-147. Positions Gly-182 to Asp-211 are disordered. Over residues Ser-186–Ser-199 the composition is skewed to basic residues. Residues Ser-276 to Lys-515 enclose the NR LBD domain. Residues Gly-397–Leu-400, Tyr-492, and Lys-496 each bind a phospholipid derivative. The tract at residues Cys-504–Lys-515 is AF-2.

This sequence belongs to the nuclear hormone receptor family. NR5 subfamily. As to quaternary structure, monomer; Binds DNA as a monomer.

It is found in the nucleus. The protein localises to the chromosome. Functionally, orphan nuclear receptor that binds DNA as a monomer to the 5'-TCAAGGCCA-3' sequence and controls expression of target genes: regulates key biological processes, such as cholesterol and bile acid synthesis pathways, as well as cartilage, liver and pancreas morphogenesis. Ligand-binding causes conformational change which causes recruitment of coactivators, promoting target gene activation. The specific ligand is unknown, but specific phospholipids, such as phosphatidylethanolamine, phosphatidylserine, dilauroyl phosphatidylcholine and diundecanoyl phosphatidylcholine can act as ligand in vitro. Acts as a pioneer transcription factor, which unwraps target DNA from histones and elicits local opening of closed chromatin. Involved in the formation of connective tissue in lower jaw. In terms of biological role, lacks transcription factor activity; unable to activate expression of target genes. The polypeptide is Nuclear receptor subfamily 5 group A member 2 (Danio rerio (Zebrafish)).